Here is a 104-residue protein sequence, read N- to C-terminus: DNA-directed RNA polymerase subunit omega (104 aa).

The protein belongs to the RNA polymerase subunit omega family. As to quaternary structure, the RNAP catalytic core consists of 2 alpha, 1 beta, 1 beta' and 1 omega subunit. When a sigma factor is associated with the core the holoenzyme is formed, which can initiate transcription.

It catalyses the reaction RNA(n) + a ribonucleoside 5'-triphosphate = RNA(n+1) + diphosphate. Promotes RNA polymerase assembly. Latches the N- and C-terminal regions of the beta' subunit thereby facilitating its interaction with the beta and alpha subunits. The chain is DNA-directed RNA polymerase subunit omega from Streptococcus agalactiae serotype Ia (strain ATCC 27591 / A909 / CDC SS700).